A 464-amino-acid chain; its full sequence is L-cystine uptake protein TcyP (464 aa).

Transmembrane regions (helical) follow at residues 3 to 23 (TLLV…LYYM), 34 to 54 (VFTA…IYEP), 73 to 93 (YVKL…ISAF), 107 to 127 (GLII…GIAA), 184 to 204 (PTST…FIGV), 225 to 245 (IVMR…LALM), 263 to 283 (FVLA…LLIA), 347 to 367 (AGIY…IDPL), 371 to 391 (FILT…GVGG), and 395 to 415 (FAAL…ALVI).

This sequence belongs to the dicarboxylate/amino acid:cation symporter (DAACS) (TC 2.A.23) family.

Its subcellular location is the membrane. Mediates uptake of L-cystine, the oxidized form of L-cysteine. The protein is L-cystine uptake protein TcyP of Bacillus thuringiensis (strain Al Hakam).